The chain runs to 951 residues: Valine--tRNA ligase (951 aa).

Residues 42–52 carry the 'HIGH' region motif; that stretch reads PNVTGSLHMGH. The 'KMSKS' region signature appears at 554–558; the sequence is KMSKS. K557 is an ATP binding site. A coiled-coil region spans residues 880 to 944; sequence AGLINKEDEL…AEAKAKLIEQ (65 aa).

The protein belongs to the class-I aminoacyl-tRNA synthetase family. ValS type 1 subfamily. In terms of assembly, monomer.

The protein resides in the cytoplasm. It catalyses the reaction tRNA(Val) + L-valine + ATP = L-valyl-tRNA(Val) + AMP + diphosphate. In terms of biological role, catalyzes the attachment of valine to tRNA(Val). As ValRS can inadvertently accommodate and process structurally similar amino acids such as threonine, to avoid such errors, it has a 'posttransfer' editing activity that hydrolyzes mischarged Thr-tRNA(Val) in a tRNA-dependent manner. The sequence is that of Valine--tRNA ligase from Escherichia coli O6:H1 (strain CFT073 / ATCC 700928 / UPEC).